Here is a 469-residue protein sequence, read N- to C-terminus: Cold shock protein CS66 (469 aa).

21 consecutive repeat copies span residues 9 to 31 (GEKKGIMEKIKEKLPGGHGDHKE), 49 to 62 (TGGAYGQEGHTGTT), 72 to 94 (GEKKGVMENIKDKLPGGHADHQQ), 95 to 108 (TGGTYGQQGHTGTA), 115 to 128 (TGGTYGQQGHTGTA), 135 to 148 (TNGTYGEHGHTGTA), 149 to 162 (TGGSYGEQRHTGVT), 170 to 192 (GEKKSLMENIKEKLPGGHGDNQQ), 193 to 206 (TAGTYGQQGHFATG), 213 to 226 (TGGTYGEQGHAGVT), 234 to 256 (GEKKGLMENIKDKLPGGHGDHQQ), 257 to 270 (TGGTYGQQGHTGAA), 277 to 290 (GGGTYEQHGHTGMT), 298 to 320 (GGKKGVMENIKDKLPGGHSDNQQ), 321 to 334 (TGGAYEQQGHTGAA), 341 to 354 (SGGTYEQHGHTGMT), 362 to 384 (GEKKAVMENIKDKLPGGHGDHQQ), 385 to 398 (TGGAYGQQGHTGTA), 405 to 418 (GGGTYEQHGNTGMT), 428 to 441 (TGGTHGQHGHTGTT), and 452 to 469 (GEKKSLMDKIKDKLPGQH). The tract at residues 9-390 (GEKKGIMEKI…DHQQTGGAYG (382 aa)) is 7 X 23 AA approximate repeats. A 14 X 14 AA approximate repeats region spans residues 49 to 441 (TGGAYGQEGH…HGQHGHTGTT (393 aa)). The segment at 87–112 (GGHADHQQTGGTYGQQGHTGTATHGT) is disordered. Over residues 93–112 (QQTGGTYGQQGHTGTATHGT) the composition is skewed to low complexity. The segment covering 203 to 214 (FATGTHGTPATG) has biased composition (low complexity). Residues 203–469 (FATGTHGTPA…KIKDKLPGQH (267 aa)) are disordered. Positions 233 to 254 (TGEKKGLMENIKDKLPGGHGDH) are enriched in basic and acidic residues. The span at 255-274 (QQTGGTYGQQGHTGAATHGT) shows a compositional bias: low complexity. The segment covering 288 to 301 (GMTGTGTHGTGGKK) has biased composition (gly residues). Basic and acidic residues predominate over residues 302 to 312 (GVMENIKDKLP). Residues 361–382 (TGEKKAVMENIKDKLPGGHGDH) are compositionally biased toward basic and acidic residues. 2 stretches are compositionally biased toward low complexity: residues 383-402 (QQTGGAYGQQGHTGTATHGT) and 412-429 (HGNTGMTGTETHGTTATG). Residues 439–450 (GTTGTGTHGTDG) are compositionally biased toward gly residues. Residues 451–469 (VGEKKSLMDKIKDKLPGQH) are compositionally biased toward basic and acidic residues.

This sequence belongs to the plant dehydrin family.

In terms of biological role, may reduce intracellular freezing damage during winter by hydrogen-bonding to the lattice of the nascent ice crystals, thus modifying the structure and/or propagation of ice crystals. The protein is Cold shock protein CS66 (CS66) of Triticum aestivum (Wheat).